The chain runs to 338 residues: S-adenosylmethionine:tRNA ribosyltransferase-isomerase (338 aa).

It belongs to the QueA family. Monomer.

Its subcellular location is the cytoplasm. It catalyses the reaction 7-aminomethyl-7-carbaguanosine(34) in tRNA + S-adenosyl-L-methionine = epoxyqueuosine(34) in tRNA + adenine + L-methionine + 2 H(+). It participates in tRNA modification; tRNA-queuosine biosynthesis. Transfers and isomerizes the ribose moiety from AdoMet to the 7-aminomethyl group of 7-deazaguanine (preQ1-tRNA) to give epoxyqueuosine (oQ-tRNA). This is S-adenosylmethionine:tRNA ribosyltransferase-isomerase from Francisella tularensis subsp. novicida (strain U112).